Consider the following 167-residue polypeptide: 3-dehydroquinate dehydratase (167 aa).

Tyrosine 22 (proton acceptor) is an active-site residue. The substrate site is built by asparagine 76, histidine 82, and aspartate 89. Residue histidine 102 is the Proton donor of the active site. Substrate contacts are provided by residues 103–104 and arginine 113; that span reads LT.

The protein belongs to the type-II 3-dehydroquinase family. Homododecamer.

It catalyses the reaction 3-dehydroquinate = 3-dehydroshikimate + H2O. The protein operates within metabolic intermediate biosynthesis; chorismate biosynthesis; chorismate from D-erythrose 4-phosphate and phosphoenolpyruvate: step 3/7. Catalyzes a trans-dehydration via an enolate intermediate. This Helicobacter pylori (strain Shi470) protein is 3-dehydroquinate dehydratase.